The primary structure comprises 1063 residues: Endo-1,4-beta-xylanase 2 (1063 aa).

CBM-cenC domains are found at residues 5-146 (NIVM…GPAP), 183-313 (NIIK…LEGP), 348-482 (NHIF…IEGP), and 517-662 (NIVS…QGPS). Positions 711 to 1006 (SGATVKIRQT…NEAGKRFLEI (296 aa)) constitute a GH10 domain. E840 acts as the Proton donor in catalysis. Catalysis depends on E941, which acts as the Nucleophile.

The protein belongs to the glycosyl hydrolase 10 (cellulase F) family.

It carries out the reaction Endohydrolysis of (1-&gt;4)-beta-D-xylosidic linkages in xylans.. It functions in the pathway glycan degradation; xylan degradation. Its function is as follows. Binds to and hydrolyzes insoluble and soluble xylan substrates. This Arabidopsis thaliana (Mouse-ear cress) protein is Endo-1,4-beta-xylanase 2.